The chain runs to 443 residues: Amino-acid acetyltransferase (443 aa).

The N-acetyltransferase domain maps to 296–443; sequence EQIRRATIND…KSKVLMADLG (148 aa).

It belongs to the acetyltransferase family. ArgA subfamily. Homohexamer.

The protein resides in the cytoplasm. The enzyme catalyses L-glutamate + acetyl-CoA = N-acetyl-L-glutamate + CoA + H(+). Its pathway is amino-acid biosynthesis; L-arginine biosynthesis; N(2)-acetyl-L-ornithine from L-glutamate: step 1/4. The chain is Amino-acid acetyltransferase (argA) from Escherichia coli O157:H7.